The following is a 453-amino-acid chain: MREGSHLIVLPFPGQGHITPMSQFCKRLASKGLKLTLVLVSDKPSPPYKTEHDSITVFPISNGFQEGEEPLQDLDDYMERVETSIKNTLPKLVEDMKLSGNPPRAIVYDSTMPWLLDVAHSYGLSGAVFFTQPWLVTAIYYHVFKGSFSVPSTKYGHSTLASFPSFPMLTANDLPSFLCESSSYPNILRIVVDQLSNIDRVDIVLCNTFDKLEEKLLKWVQSLWPVLNIGPTVPSMYLDKRLSEDKNYGFSLFNAKVAECMEWLNSKEPNSVVYLSFGSLVILKEDQMLELAAGLKQSGRFFLWVVRETETHKLPRNYVEEIGEKGLIVSWSPQLDVLAHKSIGCFLTHCGWNSTLEGLSLGVPMIGMPHWTDQPTNAKFMQDVWKVGVRVKAEGDGFVRREEIMRSVEEVMEGEKGKEIRKNAEKWKVLAQEAVSEGGSSDKSINEFVSMFC.

His17 (proton acceptor) is an active-site residue. His17 serves as a coordination point for an anthocyanidin. The Charge relay role is filled by Asp109. UDP-alpha-D-glucose-binding residues include Thr131, Gln334, His349, Trp352, Asn353, Ser354, Glu357, Asp373, and Gln374.

The protein belongs to the UDP-glycosyltransferase family. In terms of tissue distribution, expressed in roots, cotyledons and leaf hydathodes.

The enzyme catalyses (indol-3-yl)butanoate + UDP-alpha-D-glucose = 4-(indol-3-yl)butanoyl-beta-D-glucose + UDP. Functionally, glucosyltransferase that acts on the auxin indole-3-butyric acid (IBA). Mediates abiotic stress responses and stress-induced morphological adaptations by regulating auxin homeostasis. Possesses low activity in vitro on jasmonate (JA) and the synthetic auxin analog naphthaleneacetic acid (NAA). This is UDP-glycosyltransferase 74E2 (UGT74E2) from Arabidopsis thaliana (Mouse-ear cress).